The primary structure comprises 278 residues: NAD-capped RNA hydrolase NudC (278 aa).

Arg84 lines the substrate pocket. Zn(2+)-binding residues include Cys114 and Cys117. A substrate-binding site is contributed by Glu127. Zn(2+) contacts are provided by Cys132 and Cys135. Tyr140 lines the substrate pocket. Positions 141–265 (PRLSPSMIVL…IARHLIDLYL (125 aa)) constitute a Nudix hydrolase domain. The a divalent metal cation site is built by Ala174, Glu190, and Glu194. Residues 175–196 (GFVEAGESVEQCVVREVREEVG) carry the Nudix box motif. 208–215 (QNWPFPHS) serves as a coordination point for substrate. Glu235 serves as a coordination point for a divalent metal cation. Ala257 provides a ligand contact to substrate.

The protein belongs to the Nudix hydrolase family. NudC subfamily. Homodimer. It depends on Mg(2+) as a cofactor. Requires Mn(2+) as cofactor. The cofactor is Zn(2+).

The catalysed reaction is a 5'-end NAD(+)-phospho-ribonucleoside in mRNA + H2O = a 5'-end phospho-adenosine-phospho-ribonucleoside in mRNA + beta-nicotinamide D-ribonucleotide + 2 H(+). The enzyme catalyses NAD(+) + H2O = beta-nicotinamide D-ribonucleotide + AMP + 2 H(+). It catalyses the reaction NADH + H2O = reduced beta-nicotinamide D-ribonucleotide + AMP + 2 H(+). MRNA decapping enzyme that specifically removes the nicotinamide adenine dinucleotide (NAD) cap from a subset of mRNAs by hydrolyzing the diphosphate linkage to produce nicotinamide mononucleotide (NMN) and 5' monophosphate mRNA. The NAD-cap is present at the 5'-end of some mRNAs and stabilizes RNA against 5'-processing. Has preference for mRNAs with a 5'-end purine. Catalyzes the hydrolysis of a broad range of dinucleotide pyrophosphates. This Pseudomonas aeruginosa (strain LESB58) protein is NAD-capped RNA hydrolase NudC.